Consider the following 362-residue polypeptide: MRHVLIAVILFFLSIGLSAGCAEAGNKTQNQSATEVNASPLQPAEYFIYHNLMNDKGLIKTDFSDQPSYLSESLGLWMEFLLSKNDAPHFQDQYQHLTDSFLMSNHLVTWKIQNGQASGTNALIDDMRIMLSLDQAAAKWGRSDYAQTARDIGTSLKTYNMNNGFFTDFYDSQAASKDVTLSYVMPDALAVLKKNGIIDEETEQRNANVLYSAPLKNGFLPKTYSSETKEYTYDSEINLIDQLYAAWHLPEGDEKASVLADWIKQEFQKNGKLYGRYSAYTKEPAVQYESPSVYALAVLFLTKQHENSSVIKAIYDRMNDFEIHDPVKSYYGGYMSGTQTHSFDNLLPLLAERKLFNENIIQ.

The N-terminal stretch at 1 to 20 is a signal peptide; sequence MRHVLIAVILFFLSIGLSAG. The N-palmitoyl cysteine moiety is linked to residue Cys-21. A lipid anchor (S-diacylglycerol cysteine) is attached at Cys-21.

The protein localises to the cell membrane. The chain is Putative lipoprotein YdaJ (ydaJ) from Bacillus subtilis (strain 168).